Reading from the N-terminus, the 250-residue chain is Small ribosomal subunit protein uS2 (250 aa).

The protein belongs to the universal ribosomal protein uS2 family.

This Acidovorax sp. (strain JS42) protein is Small ribosomal subunit protein uS2.